Reading from the N-terminus, the 146-residue chain is Hemoglobin subunit beta (146 aa).

Position 1 is an N-acetylvaline (V1). The 145-residue stretch at 2–146 (HMTDAEKKLV…VANALAHKYH (145 aa)) folds into the Globin domain. Position 12 is a phosphothreonine (T12). K59 carries the post-translational modification N6-acetyllysine. H63 serves as a coordination point for heme b. K82 carries the post-translational modification N6-acetyllysine. H92 contacts heme b. C93 carries the S-nitrosocysteine modification. K144 is subject to N6-acetyllysine.

It belongs to the globin family. As to quaternary structure, tetramer of two alpha and two different beta chains. Two external cysteine residues at beta-16 and beta-52 cause reversible polymerization to octamers and most likely irreversible formation of higher polymers. In terms of tissue distribution, red blood cells.

In terms of biological role, involved in oxygen transport from the lung to the various peripheral tissues. This is Hemoglobin subunit beta (HBB) from Echinops telfairi (Lesser hedgehog tenrec).